The following is a 598-amino-acid chain: Transcription factor cpaR (598 aa).

Positions 22 to 51 (CNGCRERKRRCVRRKRELPCLSCQAENRPC) form a DNA-binding region, zn(2)-C6 fungal-type.

It is found in the nucleus. Transcription factor; part of the gene cluster that mediates the biosynthesis of the fungal neurotoxin cyclopiazonic acid (CPA), a nanomolar inhibitor of Ca(2+)-ATPase with a unique pentacyclic indole tetramic acid scaffold. This is Transcription factor cpaR from Aspergillus oryzae (Yellow koji mold).